Reading from the N-terminus, the 450-residue chain is tRNA-aminoacylation cofactor arc1 (450 aa).

The tract at residues glutamine 208 to valine 278 is disordered. Composition is skewed to basic and acidic residues over residues isoleucine 213 to proline 225 and serine 233 to glutamate 247. Residues lysine 248 to lysine 261 are compositionally biased toward basic residues. The span at aspartate 262–proline 272 shows a compositional bias: basic and acidic residues. In terms of domain architecture, tRNA-binding spans valine 278–threonine 382.

The protein belongs to the tRNA-aminoacylation cofactor ARC1 family. In terms of assembly, component of a yeast aminoacyl-tRNA synthase (aaRS) complex formed by methionyl-tRNA synthase, glutamyl-tRNA synthase and the tRNA aminoacylation cofactor arc1 in a stoichiometric complex. Interacts with rar1/mes1 and gus1.

The protein resides in the cytoplasm. Functionally, binds to tRNA and functions as a cofactor for the methionyl-tRNA synthetase (MetRS) and glutamyl-tRNA synthetase (GluRS). Forms a complex with MetRS and GluRS and increases their affinity for cognate tRNAs due to the presence of a tRNA binding domain in its middle and C-terminal part. This is tRNA-aminoacylation cofactor arc1 from Schizosaccharomyces pombe (strain 972 / ATCC 24843) (Fission yeast).